The primary structure comprises 513 residues: Na(+)/H(+) antiporter NhaB (513 aa).

Transmembrane regions (helical) follow at residues 23-43 (LALIIFLIVNPLIFLISPFVA), 52-72 (IFTLAMALKCYPLLPGGLLAI), 97-117 (LLLMFMVAGIYFMKQLLLFIF), 120-140 (LLLSIRSKMLLSLSFCVAAAF), 144-164 (FLDALTVVAVVISVAVGFYGI), 202-222 (LMMHAGVGTALGGVMTMVGEP), 238-258 (FFLRMSPVTVPVLICGLLTCL), 303-323 (AIIGVWLVTALALHLAEVGLI), 348-368 (TESLPFTALLTVFFSVVAVII), 391-411 (LFYIFNGLLSSISDNVFVGTI), 447-467 (ATPNGQAAFLFLLTSALAPLI), and 475-495 (VWMALPYTLVLTLVGLLCVEF).

This sequence belongs to the NhaB Na(+)/H(+) (TC 2.A.34) antiporter family.

It is found in the cell inner membrane. It catalyses the reaction 2 Na(+)(in) + 3 H(+)(out) = 2 Na(+)(out) + 3 H(+)(in). Functionally, na(+)/H(+) antiporter that extrudes sodium in exchange for external protons. The chain is Na(+)/H(+) antiporter NhaB from Escherichia coli (strain 55989 / EAEC).